The sequence spans 179 residues: uncharacterized protein (179 aa).

The segment at 27–54 (TAKKSRVQAREARAAVEENKKAQLERDK) is disordered.

This is an uncharacterized protein from Escherichia coli (strain K12).